The chain runs to 551 residues: Methyl-accepting chemotaxis protein I (551 aa).

At 1–6 (MLKRIK) the chain is on the cytoplasmic side. Residues 7-30 (IVTSLLLVLAVFGLLQLTSGGLFF) traverse the membrane as a helical segment. Topologically, residues 31–190 (NALKNDKENF…AVSDNNASYS (160 aa)) are periplasmic. The segment at 64-73 (RNTLNRAGIR) is the 3 Arg may form a positively charged pocket, which binds the alpha-carboxyl group of the attractant AA. A helical transmembrane segment spans residues 191 to 210 (QAMWILVGVMIVVLAVIFAV). Over 211–551 (WFGIKASLVA…ADSEENWETF (341 aa)) the chain is Cytoplasmic. One can recognise an HAMP domain in the interval 216 to 268 (ASLVAPMNRLIDSIRHIAGGDLVKPIEVDGSNEMGQLAESLRHMQGELMRTVG). Residues 273–502 (GANAIYSGAS…ESAAAAAALE (230 aa)) enclose the Methyl-accepting transducer domain. A Glutamate methyl ester (Gln) modification is found at glutamine 297. Position 304 is a glutamate methyl ester (Glu) (glutamate 304). The residue at position 311 (glutamine 311) is a Glutamate methyl ester (Gln). Residues glutamate 493 and glutamate 502 each carry the glutamate methyl ester (Glu) modification.

Belongs to the methyl-accepting chemotaxis (MCP) protein family.

The protein resides in the cell inner membrane. Functionally, receptor for the attractant L-serine and related amino acids. Is also responsible for chemotaxis away from a wide range of repellents, including leucine, indole, and weak acids. Chemotactic-signal transducers respond to changes in the concentration of attractants and repellents in the environment, transduce a signal from the outside to the inside of the cell, and facilitate sensory adaptation through the variation of the level of methylation. Attractants increase the level of methylation while repellents decrease the level of methylation, the methyl groups are added by the methyltransferase CheR and removed by the methylesterase CheB. The polypeptide is Methyl-accepting chemotaxis protein I (tsr) (Escherichia coli (strain K12)).